A 139-amino-acid polypeptide reads, in one-letter code: Large ribosomal subunit protein uL13 (139 aa).

It belongs to the universal ribosomal protein uL13 family. Part of the 50S ribosomal subunit.

Functionally, this protein is one of the early assembly proteins of the 50S ribosomal subunit, although it is not seen to bind rRNA by itself. It is important during the early stages of 50S assembly. The protein is Large ribosomal subunit protein uL13 of Aliarcobacter butzleri (strain RM4018) (Arcobacter butzleri).